The following is a 725-amino-acid chain: FYVE, RhoGEF and PH domain-containing protein 3 (725 aa).

A disordered region spans residues 1–151 (MESGRGSSTP…KADKDAGLAQ (151 aa)). Over residues 124 to 136 (EEADSDVGEEPDS) the composition is skewed to acidic residues. Ser128 is modified (phosphoserine). Residues 157–341 (KLLHIAQELL…STAANHSNAA (185 aa)) enclose the DH domain. The 100-residue stretch at 370 to 469 (ELIKEGQIQK…WIQIIQATIE (100 aa)) folds into the PH 1 domain. The interval 487-532 (QDEDPSLSPDMPITSTSPVEPVVTTEGSSGAAGLEPRKLSSKTRRD) is disordered. Low complexity predominate over residues 500 to 512 (TSTSPVEPVVTTE). Over residues 521 to 532 (EPRKLSSKTRRD) the composition is skewed to basic and acidic residues. Residues 532-588 (DKEKQSCKSCGETFNSITKRRHHCKLCGAVICGKCSEFKAENSRQSRVCRDCFLTQP) form an FYVE-type zinc finger. Cys538, Cys541, Cys555, Cys558, Cys563, Cys566, Cys580, and Cys583 together coordinate Zn(2+). One can recognise a PH 2 domain in the interval 604–703 (PSLLCGPLRL…WLETLSTAAH (100 aa)). The interval 703–725 (HGDTAQDSPGALQLQVPMGAAAP) is disordered.

It localises to the cytoplasm. The protein resides in the cytoskeleton. Its function is as follows. Promotes the formation of filopodia. May activate CDC42, a member of the Ras-like family of Rho- and Rac proteins, by exchanging bound GDP for free GTP. Plays a role in regulating the actin cytoskeleton and cell shape. The polypeptide is FYVE, RhoGEF and PH domain-containing protein 3 (FGD3) (Homo sapiens (Human)).